A 337-amino-acid polypeptide reads, in one-letter code: Ornithine carbamoyltransferase, catabolic (337 aa).

Carbamoyl phosphate contacts are provided by residues 57–60, Q84, R108, and 135–138; these read STRT and HPTQ. L-ornithine-binding positions include N167, D231, and 235–236; that span reads SM. Carbamoyl phosphate is bound by residues 272 to 273 and R317; that span reads CL.

The protein belongs to the aspartate/ornithine carbamoyltransferase superfamily. OTCase family.

The protein resides in the cytoplasm. The catalysed reaction is carbamoyl phosphate + L-ornithine = L-citrulline + phosphate + H(+). The protein operates within amino-acid degradation; L-arginine degradation via ADI pathway; carbamoyl phosphate from L-arginine: step 2/2. Functionally, reversibly catalyzes the transfer of the carbamoyl group from carbamoyl phosphate (CP) to the N(epsilon) atom of ornithine (ORN) to produce L-citrulline. The protein is Ornithine carbamoyltransferase, catabolic of Streptococcus suis (strain 89/1591).